The following is a 224-amino-acid chain: Small ribosomal subunit protein uS3 (224 aa).

A KH type-2 domain is found at 39 to 107 (IREFLKKKPS…DVWVEIAEVK (69 aa)).

Belongs to the universal ribosomal protein uS3 family. In terms of assembly, part of the 30S ribosomal subunit. Forms a tight complex with proteins S10 and S14.

Functionally, binds the lower part of the 30S subunit head. Binds mRNA in the 70S ribosome, positioning it for translation. The chain is Small ribosomal subunit protein uS3 from Chlamydia trachomatis serovar D (strain ATCC VR-885 / DSM 19411 / UW-3/Cx).